The chain runs to 144 residues: Mannitol-specific phosphotransferase enzyme IIA component (144 aa).

Residues 3–142 enclose the PTS EIIA type-2 domain; that stretch reads ELFSNDNIFL…EEIKQVFEEA (140 aa). The active-site Tele-phosphohistidine intermediate is H63. The residue at position 63 (H63) is a Phosphohistidine; by HPr.

Homodimer or homotrimer. Seems to be a monomer when not phosphorylated.

Its subcellular location is the cytoplasm. Its function is as follows. The phosphoenolpyruvate-dependent sugar phosphotransferase system (sugar PTS), a major carbohydrate active transport system, catalyzes the phosphorylation of incoming sugar substrates concomitantly with their translocation across the cell membrane. The enzyme II CmtAB PTS system is involved in D-mannitol transport. This Staphylococcus aureus (strain MRSA252) protein is Mannitol-specific phosphotransferase enzyme IIA component (mtlF).